Here is a 264-residue protein sequence, read N- to C-terminus: ATP synthase subunit a (264 aa).

Transmembrane regions (helical) follow at residues 29-49 (TWHI…LWIF), 87-107 (NALI…MNFM), 134-154 (DVNI…YYSI), 177-197 (IPVN…SLAL), 208-228 (LIFI…SLGV), and 235-255 (LIFH…LTIV).

This sequence belongs to the ATPase A chain family. In terms of assembly, F-type ATPases have 2 components, CF(1) - the catalytic core - and CF(0) - the membrane proton channel. CF(1) has five subunits: alpha(3), beta(3), gamma(1), delta(1), epsilon(1). CF(0) has three main subunits: a(1), b(2) and c(9-12). The alpha and beta chains form an alternating ring which encloses part of the gamma chain. CF(1) is attached to CF(0) by a central stalk formed by the gamma and epsilon chains, while a peripheral stalk is formed by the delta and b chains.

It localises to the cell inner membrane. In terms of biological role, key component of the proton channel; it plays a direct role in the translocation of protons across the membrane. This chain is ATP synthase subunit a, found in Shewanella sp. (strain ANA-3).